Reading from the N-terminus, the 908-residue chain is Protein translocase subunit SecA (908 aa).

Residues Gln-87, 105-109 (GEGKT), and Asp-512 contribute to the ATP site. The disordered stretch occupies residues 865–908 (GGDDGSDEMMAHTPMIRDGDKVGRNDPCPCGSGRKYKQCHGKLS). The segment covering 879–888 (MIRDGDKVGR) has biased composition (basic and acidic residues). Zn(2+) contacts are provided by Cys-892, Cys-894, Cys-903, and His-904. A compositionally biased stretch (basic residues) spans 898-908 (RKYKQCHGKLS).

It belongs to the SecA family. In terms of assembly, monomer and homodimer. Part of the essential Sec protein translocation apparatus which comprises SecA, SecYEG and auxiliary proteins SecDF-YajC and YidC. Requires Zn(2+) as cofactor.

Its subcellular location is the cell inner membrane. It localises to the cytoplasm. The catalysed reaction is ATP + H2O + cellular proteinSide 1 = ADP + phosphate + cellular proteinSide 2.. Part of the Sec protein translocase complex. Interacts with the SecYEG preprotein conducting channel. Has a central role in coupling the hydrolysis of ATP to the transfer of proteins into and across the cell membrane, serving both as a receptor for the preprotein-SecB complex and as an ATP-driven molecular motor driving the stepwise translocation of polypeptide chains across the membrane. The sequence is that of Protein translocase subunit SecA from Shewanella sp. (strain MR-4).